The primary structure comprises 264 residues: Chymotrypsin-like protease CTRL-1 (264 aa).

The signal sequence occupies residues 1-18 (MLLLSLTLSLVLLGSSWG). Residues 19–33 (CGIPAIKPALSFSQR) constitute a propeptide, activation peptide. 5 disulfide bridges follow: C19/C141, C60/C76, C155/C220, C187/C201, and C210/C239. A Peptidase S1 domain is found at 34 to 262 (IVNGENAVLG…FSTWINQVIA (229 aa)). Catalysis depends on H75, which acts as the Charge relay system. Residue N114 is glycosylated (N-linked (GlcNAc...) asparagine). D121 serves as the catalytic Charge relay system. S214 serves as the catalytic Charge relay system.

The protein belongs to the peptidase S1 family.

The polypeptide is Chymotrypsin-like protease CTRL-1 (CTRL) (Homo sapiens (Human)).